Reading from the N-terminus, the 355-residue chain is 3-isopropylmalate dehydrogenase (355 aa).

77–90 (GAKWDNLPREKRPE) serves as a coordination point for NAD(+). Substrate contacts are provided by R97, R107, R135, and D220. 3 residues coordinate Mg(2+): D220, D244, and D248. Residue 277–289 (GSAPDIAGQGIAN) coordinates NAD(+).

The protein belongs to the isocitrate and isopropylmalate dehydrogenases family. LeuB type 1 subfamily. Homodimer. It depends on Mg(2+) as a cofactor. The cofactor is Mn(2+).

Its subcellular location is the cytoplasm. It catalyses the reaction (2R,3S)-3-isopropylmalate + NAD(+) = 4-methyl-2-oxopentanoate + CO2 + NADH. It participates in amino-acid biosynthesis; L-leucine biosynthesis; L-leucine from 3-methyl-2-oxobutanoate: step 3/4. Functionally, catalyzes the oxidation of 3-carboxy-2-hydroxy-4-methylpentanoate (3-isopropylmalate) to 3-carboxy-4-methyl-2-oxopentanoate. The product decarboxylates to 4-methyl-2 oxopentanoate. This is 3-isopropylmalate dehydrogenase from Sulfurimonas denitrificans (strain ATCC 33889 / DSM 1251) (Thiomicrospira denitrificans (strain ATCC 33889 / DSM 1251)).